A 207-amino-acid polypeptide reads, in one-letter code: Vascular endothelial growth factor B (207 aa).

The first 21 residues, 1 to 21 (MSPLLRRLLLAVLLQLAPAQA), serve as a signal peptide directing secretion. 3 disulfide bridges follow: Cys-47–Cys-89, Cys-78–Cys-122, and Cys-82–Cys-124. A compositionally biased stretch (basic and acidic residues) spans 124-139 (CRPKKRESAVKPDRAS). The interval 124 to 207 (CRPKKRESAV…AASSVVKGGA (84 aa)) is disordered. The span at 174–201 (PSAHAAPSAASALTPGPATAAADAAASS) shows a compositional bias: low complexity.

It belongs to the PDGF/VEGF growth factor family. In terms of assembly, homodimer; disulfide-linked. Can also form heterodimer with VEGF. Post-translationally, VEGF-B186 is O-glycosylated.

Its subcellular location is the secreted. Growth factor for endothelial cells. VEGF-B167 binds heparin and neuropilin-1 whereas the binding to neuropilin-1 of VEGF-B186 is regulated by proteolysis. This Bos taurus (Bovine) protein is Vascular endothelial growth factor B (VEGFB).